We begin with the raw amino-acid sequence, 743 residues long: MKQAMTPEEIKEKKPYLDWSLTEHEYDYICDKLLKRLPNYTEIGLFSAMWSEHCSYKKSKPVLRLFPTKGKRVVQGPGEGAGVVDIDDGQAVVFKAESHNHPTTVEPYQGAATGVGGILRDVFSMGARPVAILDSLHFGELKNNPTMRYKMEETIRGVGDYGNCIGIPNLGGETTFDSCYNGNILLNAMCVGLMNIKDMEHGKAVGLGNSIMYVGAKTGRDGIHGATFASADFSKEHETQRSAVQVGDPFMEKLLMEACLELILKHRDWLVGIQDMGAAGIVSSSAEMATEGNAGMELNLDLVPQREPNMSAYEIMLSESQERMLLCVKKGHEEDVKKIFKDYNLDAVTIGRVIEGENYVLYHEGEKVCDIPVRSLTEDVLEEPSKEIKPQYIIDAEKMPAWRPSFESSGEILKRLLNQPTIANDQFITQQYDSQVRSNTIVKPGSDAGVLRIRHTKKAIAMCTDTNGRFVYLNPKIGGQRSVIESVCNIVASGAKPLAITDCLNYGDPNDPEIFWSLRESCQGIADACRIFETPVVSGNVSLYNENDGQAIYPSPMIGMVGLIKNTDYVIPMHVQEADDIVYLVGKTTADFAGSEVQKMLQGKISGLPEAPNLELIHDYLKNLHKAMTQGLVTSAHDLSEGGLAVSLAESVFDTEFGLNINLSEFDKTLLFSETPGRLIVSVKPENKSAFESLLGSAVQEIGRVTDQRKLSIKLANDELNTDVASLEKIWKESIPCLMKSKA.

Residue His53 is part of the active site. Residues Tyr56 and Lys95 each contribute to the ATP site. Position 97 (Glu97) interacts with Mg(2+). Substrate-binding positions include 98 to 101 (SHNH) and Arg120. His99 serves as the catalytic Proton acceptor. Asp121 contacts Mg(2+). Gln245 lines the substrate pocket. Asp275 is a Mg(2+) binding site. Substrate is bound at residue 319 to 321 (ESQ). Residues Asp502 and Gly539 each contribute to the ATP site. Mg(2+) is bound at residue Asn540. Ser542 is a substrate binding site.

This sequence belongs to the FGAMS family. In terms of assembly, monomer. Part of the FGAM synthase complex composed of 1 PurL, 1 PurQ and 2 PurS subunits.

It localises to the cytoplasm. The catalysed reaction is N(2)-formyl-N(1)-(5-phospho-beta-D-ribosyl)glycinamide + L-glutamine + ATP + H2O = 2-formamido-N(1)-(5-O-phospho-beta-D-ribosyl)acetamidine + L-glutamate + ADP + phosphate + H(+). The protein operates within purine metabolism; IMP biosynthesis via de novo pathway; 5-amino-1-(5-phospho-D-ribosyl)imidazole from N(2)-formyl-N(1)-(5-phospho-D-ribosyl)glycinamide: step 1/2. In terms of biological role, part of the phosphoribosylformylglycinamidine synthase complex involved in the purines biosynthetic pathway. Catalyzes the ATP-dependent conversion of formylglycinamide ribonucleotide (FGAR) and glutamine to yield formylglycinamidine ribonucleotide (FGAM) and glutamate. The FGAM synthase complex is composed of three subunits. PurQ produces an ammonia molecule by converting glutamine to glutamate. PurL transfers the ammonia molecule to FGAR to form FGAM in an ATP-dependent manner. PurS interacts with PurQ and PurL and is thought to assist in the transfer of the ammonia molecule from PurQ to PurL. The sequence is that of Phosphoribosylformylglycinamidine synthase subunit PurL from Lactobacillus helveticus (strain DPC 4571).